A 1605-amino-acid polypeptide reads, in one-letter code: Zinc finger protein jing homolog (1605 aa).

The span at 1-15 shows a compositional bias: polar residues; it reads MQHQSLSVRNSSGIS. Disordered stretches follow at residues 1–28, 60–117, 359–388, 441–468, 856–877, 917–947, and 991–1213; these read MQHQSLSVRNSSGISGNRDENFPSVRSS, QWPW…QQSN, TRKVSHSPQGGLGVGQPKKPVTIAPRTSDP, QQHQQSTQTQQQTSQNQSQPQQNQTQAQ, STTSSKPPPPIKPISSTEPPKL, TKATSTTPIKDKPKPNLPMSEPPALAPASCT, and NDSG…TDFL. The span at 64–117 shows a compositional bias: low complexity; that stretch reads NTSNNTNATNSNNVQSNNNSSTATSNSSTNSNNSPAVNTPTTQNQSQPTTQQSN. A compositionally biased stretch (polar residues) spans 991-1000; the sequence is NDSGIVANSS. The segment covering 1021–1030 has biased composition (basic and acidic residues); that stretch reads PQKKDEESRQ. The segment covering 1035–1049 has biased composition (pro residues); sequence SPVPSPSPLSEPPVI. Acidic residues-rich tracts occupy residues 1053 to 1090 and 1099 to 1110; these read SEPEPEPEPELEPEPEMEPEPETEPEPEVEPEPEDEPH and SSEAVELPELED. The span at 1112–1126 shows a compositional bias: pro residues; it reads QPSPPLPCELPPPPT. Residues 1135–1149 are compositionally biased toward low complexity; that stretch reads LSLPPSQKSPKSLLL. Over residues 1165 to 1201 the composition is skewed to polar residues; sequence QESMSSDQDYSNQSPLDESSPTGSAEPSESQRSTTPV. Residues 1260 to 1285 form a C2H2-type 1 zinc finger; that stretch reads GVCYWSNCDAQFDTSSKLLDHLQIQH. The segment at 1293–1320 adopts a C2H2-type 2; degenerate zinc-finger fold; sequence FACLWDGCKVHNKESCSRRWLERHVLSH. The segment at 1326–1350 adopts a C2H2-type 3 zinc-finger fold; it reads HKCIVAGCGMRFGSQLALEKHVNHH. Disordered regions lie at residues 1352 to 1371 and 1511 to 1605; these read NNTDNASAGKRSSDPPLPKV and CSRS…SSTS. 2 stretches are compositionally biased toward low complexity: residues 1511–1537 and 1556–1605; these read CSRSSFSSSSSSSSSSGCSSASSSLIS and KQSY…SSTS.

This sequence belongs to the AEBP2/jing C2H2-type zinc-finger family.

It localises to the nucleus. In terms of biological role, may functionally interact with Polycomb group (PcG) and trithorax group (trxG) proteins to repress transcription. The polypeptide is Zinc finger protein jing homolog (Aedes aegypti (Yellowfever mosquito)).